The sequence spans 294 residues: 4-hydroxy-tetrahydrodipicolinate synthase (294 aa).

T47 provides a ligand contact to pyruvate. Y135 serves as the catalytic Proton donor/acceptor. K163 acts as the Schiff-base intermediate with substrate in catalysis. T205 lines the pyruvate pocket.

Belongs to the DapA family. In terms of assembly, homotetramer; dimer of dimers.

It localises to the cytoplasm. The catalysed reaction is L-aspartate 4-semialdehyde + pyruvate = (2S,4S)-4-hydroxy-2,3,4,5-tetrahydrodipicolinate + H2O + H(+). Its pathway is amino-acid biosynthesis; L-lysine biosynthesis via DAP pathway; (S)-tetrahydrodipicolinate from L-aspartate: step 3/4. Functionally, catalyzes the condensation of (S)-aspartate-beta-semialdehyde [(S)-ASA] and pyruvate to 4-hydroxy-tetrahydrodipicolinate (HTPA). The chain is 4-hydroxy-tetrahydrodipicolinate synthase from Rickettsia conorii (strain ATCC VR-613 / Malish 7).